The chain runs to 582 residues: uncharacterized protein (582 aa).

A run of 6 helical transmembrane segments spans residues 17–37, 57–77, 131–151, 156–176, 239–259, and 271–291; these read VAMLMMLQLVSTLASLYLPTV, LGAVMLGVTGLQVLCAIGAVY, MTATVLVTAPIMCVGGIIMAI, ALTWLLLVSVPILAVANYWII, ALMLPVTTLTINASSVALIWF, and VGSLIAFLSYFAQILMAVLMA. The ABC transmembrane type-1 domain occupies 17 to 300; the sequence is VAMLMMLQLV…ATMTLAVLPR (284 aa). The ABC transporter domain maps to 335-571; that stretch reads VRLAGATFTY…CPTYAEFAAS (237 aa). 369–376 is a binding site for ATP; sequence GSTGSGKS.

The protein belongs to the ABC transporter superfamily.

Its subcellular location is the cell membrane. This is an uncharacterized protein from Mycobacterium tuberculosis (strain CDC 1551 / Oshkosh).